A 339-amino-acid polypeptide reads, in one-letter code: Putative agmatine deiminase (339 aa).

Residue Cys331 is the Amidino-cysteine intermediate of the active site.

The protein belongs to the agmatine deiminase family.

It catalyses the reaction agmatine + H2O = N-carbamoylputrescine + NH4(+). This Streptomyces coelicolor (strain ATCC BAA-471 / A3(2) / M145) protein is Putative agmatine deiminase.